A 357-amino-acid polypeptide reads, in one-letter code: DNA replication and repair protein RecF (357 aa).

30 to 37 (GANGSGKT) serves as a coordination point for ATP.

The protein belongs to the RecF family.

Its subcellular location is the cytoplasm. Its function is as follows. The RecF protein is involved in DNA metabolism; it is required for DNA replication and normal SOS inducibility. RecF binds preferentially to single-stranded, linear DNA. It also seems to bind ATP. The polypeptide is DNA replication and repair protein RecF (Salmonella paratyphi B (strain ATCC BAA-1250 / SPB7)).